Consider the following 313-residue polypeptide: Ribosomal RNA small subunit methyltransferase H (313 aa).

S-adenosyl-L-methionine contacts are provided by residues 35–37, D55, F80, D102, and Q109; that span reads GGH.

Belongs to the methyltransferase superfamily. RsmH family.

It localises to the cytoplasm. It catalyses the reaction cytidine(1402) in 16S rRNA + S-adenosyl-L-methionine = N(4)-methylcytidine(1402) in 16S rRNA + S-adenosyl-L-homocysteine + H(+). Its function is as follows. Specifically methylates the N4 position of cytidine in position 1402 (C1402) of 16S rRNA. This is Ribosomal RNA small subunit methyltransferase H from Shewanella violacea (strain JCM 10179 / CIP 106290 / LMG 19151 / DSS12).